Reading from the N-terminus, the 121-residue chain is Small ribosomal subunit protein uS11c (121 aa).

It belongs to the universal ribosomal protein uS11 family. Part of the 30S ribosomal subunit.

The protein resides in the plastid. Its subcellular location is the chloroplast. The protein is Small ribosomal subunit protein uS11c of Cyanidioschyzon merolae (strain NIES-3377 / 10D) (Unicellular red alga).